The following is a 393-amino-acid chain: Squamosa promoter-binding-like protein 11 (393 aa).

The segment at 74 to 96 is disordered; that stretch reads QSTSINSSSPEAKRCKLASESSP. An SBP-type zinc finger spans residues 172–249; sequence VPRCQIDGCE…SHHNARRRKP (78 aa). Zn(2+)-binding residues include cysteine 175, cysteine 180, cysteine 197, histidine 200, cysteine 216, cysteine 219, histidine 223, and cysteine 235. Residues 232–248 carry the Bipartite nuclear localization signal motif; it reads KRSCRKRLSHHNARRRK.

The cofactor is Zn(2+).

Its subcellular location is the nucleus. In terms of biological role, trans-acting factor that binds specifically to the consensus nucleotide sequence 5'-TNCGTACAA-3'. In Arabidopsis thaliana (Mouse-ear cress), this protein is Squamosa promoter-binding-like protein 11 (SPL11).